The sequence spans 310 residues: Mitochondrial citrate transporter E (310 aa).

Solcar repeat units lie at residues 2 to 95 (STTT…LRQG), 107 to 199 (QSLG…AKRR), and 208 to 293 (DGPG…TNKI). The next 6 helical transmembrane spans lie at 8–28 (FIAG…FETV), 72–92 (GSAY…YEPL), 114–133 (LAGA…FFLV), 178–198 (AMVR…FAKR), 211–228 (GLHL…CCVM), and 265–286 (IYKG…TLSL).

It belongs to the mitochondrial carrier (TC 2.A.29) family.

Its subcellular location is the mitochondrion inner membrane. Its function is as follows. Mitochondrial transporter that does not mediate citrate export from mitochondria to cytoplasm. Its exact function has still to be determined. This is Mitochondrial citrate transporter E from Aspergillus niger (strain ATCC 1015 / CBS 113.46 / FGSC A1144 / LSHB Ac4 / NCTC 3858a / NRRL 328 / USDA 3528.7).